The sequence spans 32 residues: C-reactive protein (32 aa).

The 31-residue stretch at 2–32 folds into the Pentraxin (PTX) domain; the sequence is VIKTLVFQSESNNSFVELIPMKPLNLRAFXL.

It belongs to the pentraxin family. In terms of assembly, homopentamer. Pentraxin (or pentaxin) have a discoid arrangement of 5 non-covalently bound subunits. Post-translationally, glycosylated.

It is found in the secreted. Its function is as follows. Displays several functions associated with host defense: it promotes agglutination, bacterial capsular swelling, phagocytosis, and complement fixation through its calcium-dependent binding to phosphorylcholine. In Pleuronectes platessa (European plaice), this protein is C-reactive protein.